The following is a 114-amino-acid chain: Ribosome-binding factor A (114 aa).

The protein belongs to the RbfA family. As to quaternary structure, monomer. Binds 30S ribosomal subunits, but not 50S ribosomal subunits or 70S ribosomes.

The protein resides in the cytoplasm. One of several proteins that assist in the late maturation steps of the functional core of the 30S ribosomal subunit. Associates with free 30S ribosomal subunits (but not with 30S subunits that are part of 70S ribosomes or polysomes). Required for efficient processing of 16S rRNA. May interact with the 5'-terminal helix region of 16S rRNA. The protein is Ribosome-binding factor A of Macrococcus caseolyticus (strain JCSC5402) (Macrococcoides caseolyticum).